The primary structure comprises 201 residues: Glycerol-3-phosphate acyltransferase (201 aa).

Helical transmembrane passes span 10–30 (MLIG…GLIL), 60–80 (LAAA…LIAA), 86–106 (AAIA…WIGF), 116–136 (LGVL…AWIV), and 166–186 (ALAA…RANI).

Belongs to the PlsY family. As to quaternary structure, probably interacts with PlsX.

The protein localises to the cell inner membrane. The catalysed reaction is an acyl phosphate + sn-glycerol 3-phosphate = a 1-acyl-sn-glycero-3-phosphate + phosphate. It participates in lipid metabolism; phospholipid metabolism. In terms of biological role, catalyzes the transfer of an acyl group from acyl-phosphate (acyl-PO(4)) to glycerol-3-phosphate (G3P) to form lysophosphatidic acid (LPA). This enzyme utilizes acyl-phosphate as fatty acyl donor, but not acyl-CoA or acyl-ACP. The chain is Glycerol-3-phosphate acyltransferase from Brucella melitensis biotype 2 (strain ATCC 23457).